Here is a 347-residue protein sequence, read N- to C-terminus: NADH-ubiquinone oxidoreductase chain 2 (347 aa).

9 consecutive transmembrane segments (helical) span residues 3–23 (PPIF…VLIS), 25–45 (HWLL…PILM), 59–79 (YFLT…INLL), 111–131 (FHFW…MILL), 149–169 (INPN…GWGG), 200–220 (LMHL…MLFM), 242–262 (LLIL…GFIP), 274–294 (NMII…YFYM), and 325–345 (LLPP…MMLI).

This sequence belongs to the complex I subunit 2 family. As to quaternary structure, core subunit of respiratory chain NADH dehydrogenase (Complex I) which is composed of 45 different subunits. Interacts with TMEM242.

It localises to the mitochondrion inner membrane. It catalyses the reaction a ubiquinone + NADH + 5 H(+)(in) = a ubiquinol + NAD(+) + 4 H(+)(out). Core subunit of the mitochondrial membrane respiratory chain NADH dehydrogenase (Complex I) which catalyzes electron transfer from NADH through the respiratory chain, using ubiquinone as an electron acceptor. Essential for the catalytic activity and assembly of complex I. The chain is NADH-ubiquinone oxidoreductase chain 2 from Ailurus fulgens (Himalayan red panda).